The primary structure comprises 78 residues: Large ribosomal subunit protein bL28 (78 aa).

The protein belongs to the bacterial ribosomal protein bL28 family.

This chain is Large ribosomal subunit protein bL28, found in Prochlorococcus marinus (strain MIT 9211).